Consider the following 596-residue polypeptide: Germinal center kinase 3 (596 aa).

Residues 1 to 54 (MSSSNLAGNTNTTTTSSAASAAAAHSAANASTITSEYSTTQTTTGTFNTDTLSS) show a composition bias toward low complexity. A disordered region spans residues 1-80 (MSSSNLAGNT…PPPPPQVSSP (80 aa)). 2 positions are modified to phosphothreonine; by autocatalysis: Thr13 and Thr32. The span at 67–77 (SQPPPPPPPQV) shows a compositional bias: pro residues. The region spanning 108 to 386 (YKLDESIGVG…ASELLKYSFF (279 aa)) is the Protein kinase domain. ATP is bound by residues 114-122 (IGVGATATV) and Lys137. Ser190 carries the post-translational modification Phosphoserine; by autocatalysis. Asp240 (proton acceptor) is an active-site residue. Residue Thr280 is modified to Phosphothreonine. A Phosphoserine; by autocatalysis modification is found at Ser405. At Ser419 the chain carries Phosphoserine. A disordered region spans residues 429-496 (NWEFEYDSPQ…EGGGATTPCP (68 aa)). Positions 432-450 (FEYDSPQESDDDSDLEDEE) are enriched in acidic residues. The span at 466-479 (GAAGAAGGATGGAA) shows a compositional bias: gly residues.

Belongs to the protein kinase superfamily. STE Ser/Thr protein kinase family. STE20 subfamily. As to quaternary structure, interacts (via C-terminus) with clh-3; required for the phosphorylation-mediated inhibition of clh-3 function. Interacts (via C-terminus) with wnk-1; the interaction is direct. In terms of processing, phosphorylated at Thr-280 and Ser-419 probably by wnk-1; phosphorylation results in weak activation. Predominantly autophosphorylated at Thr-32 and Ser-190 and weakly autophosphorylated at Thr-13 and Ser-405 in vitro. In terms of tissue distribution, ubiquitously expressed with a higher expression in the excretory cell. Expressed in both male and female germ cells; up-regulated in maturing spermatocytes but absent in mature sperm.

The protein resides in the cytoplasm. Its subcellular location is the nucleus. The enzyme catalyses L-seryl-[protein] + ATP = O-phospho-L-seryl-[protein] + ADP + H(+). It carries out the reaction L-threonyl-[protein] + ATP = O-phospho-L-threonyl-[protein] + ADP + H(+). Its function is as follows. Plays a role in osmotic stress responses by regulating ion homeostasis and by controlling cell volume via the phosphorylation-mediated inhibition of the chloride channel clh-3. In addition, increases gpdh-1 translation upon osmotic stress, likely downstream of wnk-1. Involved in several developmental processes including the tubular formation of the excretory canals, the formation of the intestine and the progression through larval stages. In addition, required for germ line development by controlling meiosis and chromosomal segregation during spermatogenesis. By controlling clh-3 activity, may regulate the development of the excretory canals and fertility. The protein is Germinal center kinase 3 of Caenorhabditis elegans.